Consider the following 418-residue polypeptide: MSQIFKERNHFYIRICEGYVLPLLLILHDHQYFNNIQFLELITVLQGIIRNHFKNGMGLRSTYIAPESASTSKPIYLSDIGFTIRFAPTYPRYSIMVKNIKPQENRNEPIKIKRKETIYIDNKVKDSINNSNNNNNKKDKKDKNKQNEEDHLIIDDVIDEEIQEKEDNESDSDKKKLITKITTTTTTTIPTSSPTNIIDDNVEVIETRFDKEEKEREKEKEKEKEKEEKEEDIDILNDRAIALAATQEYEDDDVIFIKDDNDNDKNQNQNQNQNNNNNNNNNNNNNNNNNNNNEGEEEDEELPYQGGMYKGLYVTGHTMIVETQIKVAGATTLISQFHVANEDKDADDSDDFDEFNLPDTESQLSKSKQKSPNVKKTTTTTTTSTSTSSRKQSKSKLKPKSKSTMATNNGGISLYFKK.

4 disordered regions span residues 123–174 (KVKD…DSDK), 209–231 (FDKEEKEREKEKEKEKEKEEKEE), 258–302 (KDDN…DEEL), and 344–418 (KDAD…YFKK). The span at 136–154 (NKKDKKDKNKQNEEDHLII) shows a compositional bias: basic and acidic residues. The segment covering 156-170 (DVIDEEIQEKEDNES) has biased composition (acidic residues). Residues 209–227 (FDKEEKEREKEKEKEKEKE) show a composition bias toward basic and acidic residues. A compositionally biased stretch (low complexity) spans 266-293 (NQNQNQNQNNNNNNNNNNNNNNNNNNNN). Residues 344 to 356 (KDADDSDDFDEFN) are compositionally biased toward acidic residues. Over residues 359–374 (DTESQLSKSKQKSPNV) the composition is skewed to polar residues. Over residues 375 to 390 (KKTTTTTTTSTSTSSR) the composition is skewed to low complexity. The span at 391–401 (KQSKSKLKPKS) shows a compositional bias: basic residues.

This is an uncharacterized protein from Dictyostelium discoideum (Social amoeba).